The sequence spans 203 residues: Chaperonin-like RbcX protein 2, chloroplastic (203 aa).

A chloroplast-targeting transit peptide spans 1–78 (MVSAWFVVGS…RKSKKLLIVN (78 aa)).

Belongs to the RbcX family. Homodimer. Interacts with rbcL, atpB and RBCS-1B.

The protein localises to the plastid. It is found in the chloroplast stroma. In terms of biological role, chaperone involved in RuBisCO assembly process. The polypeptide is Chaperonin-like RbcX protein 2, chloroplastic (Arabidopsis thaliana (Mouse-ear cress)).